The sequence spans 4017 residues: Hybrid PKS-NRPS synthetase cghG (4017 aa).

Residues 6–438 (QEPIAVIGMA…GTNAHAIIES (433 aa)) enclose the Ketosynthase family 3 (KS3) domain. Residues cysteine 179, histidine 318, and histidine 358 each act as for beta-ketoacyl synthase activity in the active site. Residues 549–869 (VFTGQGAQWP…GRNKNDVVEL (321 aa)) form a malonyl-CoA:ACP transacylase (MAT) domain region. Residues 936–1072 (NPILGRRCVE…ATLHVRFHEP (137 aa)) form an N-terminal hotdog fold region. One can recognise a PKS/mFAS DH domain in the interval 936 to 1243 (NPILGRRCVE…VKPFAAATAR (308 aa)). The dehydratase (DH) domain stretch occupies residues 937 to 1240 (PILGRRCVET…AVQVKPFAAA (304 aa)). Histidine 969 (proton acceptor; for dehydratase activity) is an active-site residue. The segment at 1087–1243 (LVKTDPGRLY…VKPFAAATAR (157 aa)) is C-terminal hotdog fold. The active-site Proton donor; for dehydratase activity is aspartate 1147. The segment at 1398 to 1585 (VANVWIARMV…GVDTHCPVEK (188 aa)) is methyltransferase (MT) domain. Positions 2127–2300 (TYFLVGLSGE…XXXXXXXXXX (174 aa)) are ketoreductase (KR)domain. The Carrier 1 domain occupies 2423–2499 (AVVQDSLTEN…SLAEEAMAKI (77 aa)). An O-(pantetheine 4'-phosphoryl)serine modification is found at serine 2458. 2 disordered regions span residues 2547–2606 (VSEA…LQHR) and 2613–2632 (WAGS…AQRH). The segment covering 2548–2578 (SEASGVSATTPSTRAETDASSSPALVSTPGT) has biased composition (polar residues). The interval 2626–3020 (RRAAQRHETL…GDAMETEKLQ (395 aa)) is condensation. The adenylation stretch occupies residues 3053–3453 (EVIAQNPTAV…SGFLAIEGRI (401 aa)). Residues 3567–3586 (PKTTTASTTADGTQPAQPLT) are disordered. A compositionally biased stretch (low complexity) spans 3569–3579 (TTTASTTADGT). Positions 3583–3661 (QPLTPTESRL…SMAALLDQAG (79 aa)) constitute a Carrier 2 domain. Positions 3588–3658 (TESRLATLWA…ELGSMAALLD (71 aa)) are thiolation. Serine 3621 carries the post-translational modification O-(pantetheine 4'-phosphoryl)serine. Residues 3696-3920 (VTGASGSLGK…DVGRLEDVAA (225 aa)) are reductase-like.

It in the C-terminal section; belongs to the NRP synthetase family.

It catalyses the reaction (2S,4S)-4-hydroxy-4-methylglutamate + 8 malonyl-CoA + 3 S-adenosyl-L-methionine + ATP + 8 NADPH + 11 H(+) = (2S)-3-[(2S)-3,5-dioxo-4-[(2E,4R,6R,8E,10E,12E)-4,6,12-trimethyltetradeca-2,8,10,12-tetraenoyl]pyrrolidin-2-yl]-2-hydroxy-2-methylpropanoate + AMP + 3 S-adenosyl-L-homocysteine + 8 CO2 + diphosphate + 8 NADP(+) + 8 CoA + 6 H2O. Its pathway is secondary metabolite biosynthesis. Hybrid PKS-NRPS synthetase; part of the gene cluster that mediates the biosynthesis of the tetramic acid Sch210972, a potential anti-HIV fungal natural product that contains a decalin core. The PKS module of cghG together with the enoylreductase cghC catalyze the formation of the polyketide unit which is then conjugated to 4-hydroxyl-4-methyl glutamate (HMG) by the condensation domain of the cghG NRPS module. One unique structural feature of Sch210972 is the tetramic acid motif proposed to be derived from the non-proteinogenic amino acid HMG, by a Dieckmann-type condensation catalyzed by the reductase domain of cghG. The aldolase cghB catalyzes the aldol condensation of 2 molecules of pyruvic acid to yield the intermediate 4-hydroxyl-4-methyl-2-oxoglutarate (HMOG), which can then be stereoselectively transaminated by an unidentified enzyme to form HMG. The Diels-Alderase cghA then uses the Dieckmann product released by cghG as substrate and catalyzes the Diels-Alder cycloaddition to form the decalin ring of Sch210972. CghA also suppresses the nonenzymatic formation of the alternative stereoisomer. The protein is Hybrid PKS-NRPS synthetase cghG of Chaetomium globosum (strain ATCC 6205 / CBS 148.51 / DSM 1962 / NBRC 6347 / NRRL 1970) (Soil fungus).